A 218-amino-acid chain; its full sequence is dTTP/UTP pyrophosphatase (218 aa).

Aspartate 76 serves as the catalytic Proton acceptor.

It belongs to the Maf family. YhdE subfamily. The cofactor is a divalent metal cation.

It is found in the cytoplasm. The catalysed reaction is dTTP + H2O = dTMP + diphosphate + H(+). It carries out the reaction UTP + H2O = UMP + diphosphate + H(+). In terms of biological role, nucleoside triphosphate pyrophosphatase that hydrolyzes dTTP and UTP. May have a dual role in cell division arrest and in preventing the incorporation of modified nucleotides into cellular nucleic acids. The polypeptide is dTTP/UTP pyrophosphatase (Cytophaga hutchinsonii (strain ATCC 33406 / DSM 1761 / CIP 103989 / NBRC 15051 / NCIMB 9469 / D465)).